Reading from the N-terminus, the 192-residue chain is Peptidyl-tRNA hydrolase (192 aa).

Position 18 (tyrosine 18) interacts with tRNA. Histidine 23 (proton acceptor) is an active-site residue. TRNA contacts are provided by phenylalanine 69, asparagine 71, and asparagine 117.

It belongs to the PTH family. As to quaternary structure, monomer.

It localises to the cytoplasm. The enzyme catalyses an N-acyl-L-alpha-aminoacyl-tRNA + H2O = an N-acyl-L-amino acid + a tRNA + H(+). Functionally, hydrolyzes ribosome-free peptidyl-tRNAs (with 1 or more amino acids incorporated), which drop off the ribosome during protein synthesis, or as a result of ribosome stalling. In terms of biological role, catalyzes the release of premature peptidyl moieties from peptidyl-tRNA molecules trapped in stalled 50S ribosomal subunits, and thus maintains levels of free tRNAs and 50S ribosomes. This Neisseria gonorrhoeae (strain ATCC 700825 / FA 1090) protein is Peptidyl-tRNA hydrolase.